The sequence spans 357 residues: Queuosine-tRNA galactosyltransferase (357 aa).

The protein belongs to the glycosyltransferase 2 family.

The protein resides in the cytoplasm. It catalyses the reaction queuosine(34) in tRNA(Tyr) + UDP-alpha-D-galactose = O-5''-beta-D-galactosylqueuosine(34) in tRNA(Tyr) + UDP + H(+). In terms of biological role, glycosyltransferase that specifically catalyzes galactosylation of cytoplasmic tRNA(Tyr) modified with queuosine at position 34 (queuosine(34)). Galactosylates the cyclopentene hydroxyl group of queuosine(34) in tRNA(Tyr) to form galactosyl-queuosine(34). Mannosylation of queuosine(34) in tRNA(Tyr) is required to slow-down elongation at cognate codons UAC and suppress stop codon readthrough, thereby regulating protein translation. This is Queuosine-tRNA galactosyltransferase from Mus musculus (Mouse).